A 117-amino-acid polypeptide reads, in one-letter code: Large ribosomal subunit protein bL20c (117 aa).

It belongs to the bacterial ribosomal protein bL20 family.

It is found in the plastid. Its subcellular location is the chloroplast. Binds directly to 23S ribosomal RNA and is necessary for the in vitro assembly process of the 50S ribosomal subunit. It is not involved in the protein synthesizing functions of that subunit. This Populus trichocarpa (Western balsam poplar) protein is Large ribosomal subunit protein bL20c.